Consider the following 144-residue polypeptide: Maximins 2/H8 type 2 (144 aa).

The N-terminal stretch at methionine 1–alanine 18 is a signal peptide. The propeptide occupies arginine 19 to arginine 43. Asparagine 70 is subject to Asparagine amide. The propeptide occupies threonine 74–arginine 123. Isoleucine amide is present on isoleucine 143.

This sequence belongs to the bombinin family. Expressed by the skin glands.

The protein localises to the secreted. Functionally, maximin-2 shows antibacterial activity against both Gram-positive and Gram-negative bacteria. It also shows antimicrobial activity against the fungus C.albicans, but not against A.flavus nor P.uticale. It has little hemolytic activity. In terms of biological role, maximin-H8 shows antimicrobial activity against bacteria and against the fungus C.albicans. Shows strong hemolytic activity. This is Maximins 2/H8 type 2 from Bombina maxima (Giant fire-bellied toad).